The following is a 373-amino-acid chain: Transaldolase (373 aa).

K143 serves as the catalytic Schiff-base intermediate with substrate.

It belongs to the transaldolase family. Type 2 subfamily.

The protein resides in the cytoplasm. It carries out the reaction D-sedoheptulose 7-phosphate + D-glyceraldehyde 3-phosphate = D-erythrose 4-phosphate + beta-D-fructose 6-phosphate. It functions in the pathway carbohydrate degradation; pentose phosphate pathway; D-glyceraldehyde 3-phosphate and beta-D-fructose 6-phosphate from D-ribose 5-phosphate and D-xylulose 5-phosphate (non-oxidative stage): step 2/3. Transaldolase is important for the balance of metabolites in the pentose-phosphate pathway. The protein is Transaldolase of Mycolicibacterium paratuberculosis (strain ATCC BAA-968 / K-10) (Mycobacterium paratuberculosis).